Here is a 131-residue protein sequence, read N- to C-terminus: Proline-rich protein 3 (131 aa).

The disordered stretch occupies residues 1–77; it reads LHRGPPGSRG…KEQRNPRRLK (77 aa). Residues 12-25 are compositionally biased toward pro residues; it reads MIPPLLSLPPPPRG. Positions 28–44 are enriched in gly residues; that stretch reads PLRGGLGPRSGPYGRGW. The C3H1-type zinc finger occupies 98 to 126; that stretch reads KSDRPVCRHFAKKGHCRYEDLCAFYHPGA.

The polypeptide is Proline-rich protein 3 (PRR3) (Sus scrofa (Pig)).